The chain runs to 981 residues: Little elongation complex subunit 2 (981 aa).

A phosphoserine mark is found at Ser17 and Ser326. Disordered stretches follow at residues 406 to 427 (FGAT…TVAP) and 475 to 516 (IDSG…SDPL). The span at 408-424 (ATTTKPSKSPSPASTST) shows a compositional bias: low complexity. The segment covering 480-489 (EESKNKDDQR) has biased composition (basic and acidic residues). Ser573 carries the phosphoserine modification. Position 575 is a phosphothreonine (Thr575). Disordered stretches follow at residues 591 to 627 (HGKT…TCPE), 669 to 690 (LMNS…PSDA), and 930 to 981 (PPKS…RKIT). Residues 599–624 (SNLSSKPASLNSSSGQTSTGNQTNST) show a composition bias toward low complexity. 2 stretches are compositionally biased toward polar residues: residues 671 to 686 (NSEN…QPSA) and 954 to 969 (NSVS…QQVE).

The protein belongs to the ICE2 family. In terms of assembly, component of the little elongation complex (LEC), at least composed of ELL (ELL, ELL2 or ELL3), ZC3H8, ICE1 and ICE2. Interacts with ICE1 (via C-terminus domain). Interacts with ELL.

It is found in the nucleus. In terms of biological role, component of the little elongation complex (LEC), a complex required to regulate small nuclear RNA (snRNA) gene transcription by RNA polymerase II and III. The polypeptide is Little elongation complex subunit 2 (ICE2) (Bos taurus (Bovine)).